The following is a 157-amino-acid chain: Glycine-rich RNA-binding protein (157 aa).

Residues 6–84 (YRCFVGGLAW…RNITVNEAQS (79 aa)) form the RRM domain. The segment at 70–157 (QELDGRNITV…YGGGGGGSRW (88 aa)) is disordered. Gly residues-rich tracts occupy residues 86–138 (GSGG…GGYG) and 145–157 (DGGYGGGGGGSRW).

Functionally, may play a role in the biosynthesis and processing of heterogeneous nuclear RNA and in the maturation of specific mRNAs in response to wounding. The sequence is that of Glycine-rich RNA-binding protein from Daucus carota (Wild carrot).